The primary structure comprises 442 residues: Matrix remodeling-associated protein 8 (442 aa).

A signal peptide spans 1–19 (MELLSRVLLWKLLLLQSSA). The Extracellular segment spans residues 20-340 (VLSSGPSGTA…PEDHTHFFQQ (321 aa)). Ig-like V-type domains follow at residues 25–156 (PSGT…LEVT) and 159–291 (PLLS…LQVT). 2 disulfides stabilise this stretch: cysteine 53/cysteine 136 and cysteine 185/cysteine 271. Asparagine 118 is a glycosylation site (N-linked (GlcNAc...) asparagine). The RGD 1 motif lies at 128–130 (RGD). Residue serine 227 is modified to Phosphoserine. Residues 251–253 (RGD) carry the RGD 2 motif. The interval 296–319 (EPPARASPGNGSGHSSAPSPDPTL) is disordered. An N-linked (GlcNAc...) asparagine glycan is attached at asparagine 305. The helical transmembrane segment at 341–361 (LGYVLATLLLFILLLITVVLA) threads the bilayer. Topologically, residues 362 to 442 (TRYRHSGGCK…DKEFRKEYCK (81 aa)) are cytoplasmic.

Homodimer in cis. Does not appear to form trans-homodimers. Interacts with ITGB3; the interaction inhibits ITGAV:ITGB3 heterodimer formation. Widely expressed (at protein level). Highly expressed in brain where it localizes to the glia limitans, which is formed by the endfeet of astrocytes surrounding capillaries, and beneath the pia mater (at protein level). In lung, detected in epithelial cells of the bronchus (at protein level). Expressed in intercalated disks in the heart (at protein level). Detected in pancreatic alpha-cells in the islet of Langerhans (at protein level). In kidney, found in the brush border of the proximal convoluted tubule (at protein level). Expressed in the epithelium of the small intestine (at protein level). Weakly expressed in liver (at protein level). Detected in myeloid cells.

The protein localises to the cell membrane. It localises to the cell junction. The protein resides in the tight junction. Its subcellular location is the cytoplasm. It is found in the cell projection. The protein localises to the cilium membrane. It localises to the nucleus. In terms of biological role, transmembrane protein which can modulate activity of various signaling pathways, probably via binding to integrin ITGAV:ITGB3. Mediates heterophilic cell-cell interactions in vitro. Inhibits osteoclastogenesis downstream of TNFSF11/RANKL and CSF1, where it may function by attenuating signaling via integrin ITGB3 and MAP kinase p38. Plays a role in cartilage formation where it promotes proliferation and maturation of growth plate chondrocytes. Stimulates formation of primary cilia in chondrocytes. Enhances expression of genes involved in the hedgehog signaling pathway in chondrocytes, including the hedgehog signaling molecule IHH; may also promote signaling via the PTHLH/PTHrP pathway. Plays a role in angiogenesis where it suppresses migration of endothelial cells and also promotes their apoptosis. Inhibits VEGF-induced activation of AKT and p38 MAP kinase in endothelial cells. Also inhibits VTN (vitronectin)-mediated integrin ITGAV:ITGB3 signaling and activation of PTK2/FAK. May play a role in the maturation and maintenance of the blood-brain barrier. The protein is Matrix remodeling-associated protein 8 of Mus musculus (Mouse).